We begin with the raw amino-acid sequence, 1692 residues long: Regulating synaptic membrane exocytosis protein 1 (1692 aa).

The disordered stretch occupies residues Met1–Ser26. Over residues Gly9–Gln20 the composition is skewed to pro residues. The region spanning Leu22–Ser182 is the RabBD domain. An FYVE-type zinc finger spans residues Lys110–Glu170. Zn(2+)-binding residues include Cys116, Cys119, Cys132, Cys135, Cys140, Cys143, Cys162, and Cys165. Residues Gly183 to Gly199 are compositionally biased toward polar residues. Residues Gly183 to Ser555 form a disordered region. Residues Val204–Arg217 are compositionally biased toward basic and acidic residues. Residues Ser223 to Pro234 are compositionally biased toward low complexity. Residues Val305–Ser357 are compositionally biased toward basic and acidic residues. Positions Met377–Arg388 are enriched in basic residues. Residues Arg412–Ala430 show a composition bias toward low complexity. Over residues Pro462 to Arg475 the composition is skewed to basic and acidic residues. Positions Arg497–Val509 are enriched in polar residues. Phosphoserine is present on Ser500. A compositionally biased stretch (basic residues) spans Lys515–Gln527. A compositionally biased stretch (acidic residues) spans Ser545–Ser555. Ser578 is subject to Phosphoserine. The region spanning Arg605 to Arg691 is the PDZ domain. A disordered region spans residues Arg698–Pro732. Over residues Pro700–Ser716 the composition is skewed to low complexity. 2 positions are modified to phosphoserine: Ser728 and Ser731. A C2 1 domain is found at Leu742–Tyr865. The tract at residues His870 to Leu1013 is disordered. A Phosphoserine modification is found at Ser881. Over residues Ser935 to Gln944 the composition is skewed to polar residues. Ser977 carries the post-translational modification Phosphoserine. A compositionally biased stretch (basic and acidic residues) spans Arg992 to Asp1009. Ser1031 carries the post-translational modification Phosphoserine. Disordered regions lie at residues Asn1118–Ser1222 and Gly1235–Ser1278. Composition is skewed to basic and acidic residues over residues Ser1128–Arg1144 and Pro1157–Ser1170. Ser1252 bears the Phosphoserine mark. Polar residues predominate over residues Ser1252 to Ser1265. Thr1254 is subject to Phosphothreonine. 7 positions are modified to phosphoserine: Ser1256, Ser1308, Ser1310, Ser1311, Ser1339, Ser1340, and Ser1342. 3 disordered regions span residues Cys1332–Ser1394, Leu1408–Lys1428, and Arg1445–Asn1495. Residues Ser1345 to Ser1366 are compositionally biased toward low complexity. At Ser1416 the chain carries Phosphoserine. Basic and acidic residues predominate over residues Glu1477–Thr1490. A C2 2 domain is found at Ala1538–Tyr1656. Phosphoserine is present on residues Ser1677, Ser1680, Ser1683, and Ser1692.

In terms of assembly, binds RAB3A, RAB3B and RAB3D that have been activated by GTP-binding. Interacts with RAB3C, RAB10, RAB26 and RAB37. Binds UNC13A. Interacts with TSPOAP1 and RIMBP2. Interacts with PPFIA3 and PPFIA4. Interacts with ERC1. Binds SNAP25, SYT1 and CACNA1B. Interaction with SYT1 is enhanced by calcium ions. Interaction with SNAP25 is weaker in the presence of calcium ions. Post-translationally, phosphorylated by BRSK1. Expressed in melanocytes. Detected in brain and retina.

It localises to the cell membrane. It is found in the synapse. The protein resides in the presynaptic cell membrane. In terms of biological role, rab effector involved in exocytosis. May act as scaffold protein that regulates neurotransmitter release at the active zone. Essential for maintaining normal probability of neurotransmitter release and for regulating release during short-term synaptic plasticity. Plays a role in dendrite formation by melanocytes. This is Regulating synaptic membrane exocytosis protein 1 (RIMS1) from Homo sapiens (Human).